Reading from the N-terminus, the 287-residue chain is Type 1 encapsulin shell protein EncA (287 aa).

This sequence belongs to the encapsulin family. Family 1 subfamily. In terms of assembly, the 32 nm encapsulin nanocompartment is formed by 180 subunits; monomers form pentamers which assemble to form shells. There are 36 pores where the pentamers meet as well as 3-fold axis channels and dimer channels. The N-terminus of the protein is inside the shell.

It is found in the encapsulin nanocompartment. Shell component of a type 1, iron-storage encapsulin nanocompartment. Encapsulin nanocompartments are 32 nm in diameter with an iron- and phosphorus-rich core (4Fe:1P) about 24 nm in diameter. Upon expression in E.coli most particles are 32 nm, 20% are 18 nm. The core is filled with an average of 14 dense granules, 5-6 nm in diameter that are not evenly distributed. Each nanocompartment is estimated to hold 30,000-35,000 Fe atoms. The minor proteins EncB, EncC and EncD probably lie against the interior face of the nanocompartment. The polypeptide is Type 1 encapsulin shell protein EncA (Myxococcus xanthus (strain DK1622)).